An 860-amino-acid chain; its full sequence is Leucine--tRNA ligase (860 aa).

A 'HIGH' region motif is present at residues 42–52 (PYPSGRLHMGH). Residues 619–623 (KMSKS) carry the 'KMSKS' region motif. An ATP-binding site is contributed by lysine 622.

Belongs to the class-I aminoacyl-tRNA synthetase family.

It is found in the cytoplasm. It carries out the reaction tRNA(Leu) + L-leucine + ATP = L-leucyl-tRNA(Leu) + AMP + diphosphate. The sequence is that of Leucine--tRNA ligase from Escherichia coli O7:K1 (strain IAI39 / ExPEC).